A 485-amino-acid chain; its full sequence is GTPase Obg (485 aa).

Residues 2–159 enclose the Obg domain; it reads PRFVDRVVIH…RDLTLELKTV (158 aa). The OBG-type G domain occupies 160–341; sequence ADVGLIGFPS…LIFALWEMVK (182 aa). Residues 166 to 173, 191 to 195, 212 to 215, 292 to 295, and 322 to 324 each bind GTP; these read GFPSAGKS, FTTLV, DVPG, NKID, and STV. Mg(2+) is bound by residues Ser-173 and Thr-193. The 79-residue stretch at 359–437 folds into the OCT domain; the sequence is PIPVDESGFT…IGDVTFDWEP (79 aa). Residues 450 to 485 form a disordered region; sequence RGTDIRLEQTDRVGAAERKAARRERRQPGESGGEDS. Positions 452-468 are enriched in basic and acidic residues; that stretch reads TDIRLEQTDRVGAAERK.

This sequence belongs to the TRAFAC class OBG-HflX-like GTPase superfamily. OBG GTPase family. In terms of assembly, monomer. The cofactor is Mg(2+).

It localises to the cytoplasm. An essential GTPase which binds GTP, GDP and possibly (p)ppGpp with moderate affinity, with high nucleotide exchange rates and a fairly low GTP hydrolysis rate. Plays a role in control of the cell cycle, stress response, ribosome biogenesis and in those bacteria that undergo differentiation, in morphogenesis control. The protein is GTPase Obg of Mycolicibacterium smegmatis (strain ATCC 700084 / mc(2)155) (Mycobacterium smegmatis).